Reading from the N-terminus, the 436-residue chain is 3-ketoacyl-CoA thiolase (436 aa).

Cysteine 99 acts as the Acyl-thioester intermediate in catalysis. Residues histidine 392 and cysteine 422 each act as proton acceptor in the active site.

Belongs to the thiolase-like superfamily. Thiolase family. As to quaternary structure, heterotetramer of two alpha chains (FadJ) and two beta chains (FadI).

The protein localises to the cytoplasm. It catalyses the reaction an acyl-CoA + acetyl-CoA = a 3-oxoacyl-CoA + CoA. It functions in the pathway lipid metabolism; fatty acid beta-oxidation. Catalyzes the final step of fatty acid oxidation in which acetyl-CoA is released and the CoA ester of a fatty acid two carbons shorter is formed. The sequence is that of 3-ketoacyl-CoA thiolase from Salmonella typhi.